Here is a 130-residue protein sequence, read N- to C-terminus: Small ribosomal subunit protein uS9 (130 aa).

This sequence belongs to the universal ribosomal protein uS9 family.

This Oceanobacillus iheyensis (strain DSM 14371 / CIP 107618 / JCM 11309 / KCTC 3954 / HTE831) protein is Small ribosomal subunit protein uS9.